The primary structure comprises 448 residues: MESLYSQFAQVLERYYQSGTKIVLAFSGGVDSRLLLELLSRYQKAYSVDNQSTDSHSFKCHAVYVHHGLSSNADEWAGKCLVWAEQAGITCSVERVSLDTNSGESIELLAREARYQALAKHIQSGDLLLTGQHADDQVETFLLALKRGSGPKGLSSMAESMPFAGGTLVRPLLAIKREQIEAVAKEQGLDWVEDESNQDTRYDRNFLRHRIMPELSERWPSIHQAVQRSASLCAQQEALLDELLLAVFERALQSDFSLSIEELATHSELARARLVRMWLAKLNANMPTQVQLNLIWNEVALAQQDANPKLQLKQGEVRRFQNRLYWVTETVDVTTWQSAIQTDTALLLPEQLGELTLSTNSEQATIAMPPHPELLRVTFNPEGLSAHPTTRSHSRKLKKLFQEYNVPSWLRRQIPILMYQDKVVAVGNLFVDQAFSGQDCELIWRKSL.

27-32 lines the ATP pocket; the sequence is SGGVDS.

The protein belongs to the tRNA(Ile)-lysidine synthase family.

It is found in the cytoplasm. It catalyses the reaction cytidine(34) in tRNA(Ile2) + L-lysine + ATP = lysidine(34) in tRNA(Ile2) + AMP + diphosphate + H(+). Its function is as follows. Ligates lysine onto the cytidine present at position 34 of the AUA codon-specific tRNA(Ile) that contains the anticodon CAU, in an ATP-dependent manner. Cytidine is converted to lysidine, thus changing the amino acid specificity of the tRNA from methionine to isoleucine. The sequence is that of tRNA(Ile)-lysidine synthase from Vibrio campbellii (strain ATCC BAA-1116).